A 185-amino-acid polypeptide reads, in one-letter code: Elongation factor P (185 aa).

The protein belongs to the elongation factor P family.

The protein resides in the cytoplasm. The protein operates within protein biosynthesis; polypeptide chain elongation. In terms of biological role, involved in peptide bond synthesis. Stimulates efficient translation and peptide-bond synthesis on native or reconstituted 70S ribosomes in vitro. Probably functions indirectly by altering the affinity of the ribosome for aminoacyl-tRNA, thus increasing their reactivity as acceptors for peptidyl transferase. This chain is Elongation factor P, found in Cyanothece sp. (strain PCC 7425 / ATCC 29141).